Consider the following 497-residue polypeptide: Cytochrome P450 26A1 (497 aa).

Cysteine 442 contributes to the heme binding site.

This sequence belongs to the cytochrome P450 family. Heme is required as a cofactor.

It is found in the endoplasmic reticulum membrane. Its subcellular location is the microsome membrane. It carries out the reaction all-trans-retinoate + reduced [NADPH--hemoprotein reductase] + O2 = all-trans-(4S)-hydroxyretinoate + oxidized [NADPH--hemoprotein reductase] + H2O + H(+). The enzyme catalyses all-trans-(4S)-hydroxyretinoate + reduced [NADPH--hemoprotein reductase] + O2 = all-trans-(4S,16)-dihydroxyretinoate + oxidized [NADPH--hemoprotein reductase] + H2O + H(+). It catalyses the reaction all-trans-retinoate + reduced [NADPH--hemoprotein reductase] + O2 = all-trans-18-hydroxyretinoate + oxidized [NADPH--hemoprotein reductase] + H2O + H(+). Its function is as follows. A cytochrome P450 monooxygenase involved in the metabolism of retinoates (RAs), the active metabolites of vitamin A, and critical signaling molecules in animals. RAs exist as at least four different isomers: all-trans-RA (atRA), 9-cis-RA, 13-cis-RA, and 9,13-dicis-RA, where atRA is considered to be the biologically active isomer, although 9-cis-RA and 13-cis-RA also have activity. Catalyzes the hydroxylation of atRA primarily at C-4 and C-18, thereby contributing to the regulation of atRA homeostasis and signaling. Hydroxylation of atRA limits its biological activity and initiates a degradative process leading to its eventual elimination. Involved in the convertion of atRA to all-trans-4-oxo-RA. Able to metabolize other RAs such as 9-cis, 13-cis and 9,13-di-cis RA. Can oxidize all-trans-13,14-dihydroretinoate (DRA) to metabolites which could include all-trans-4-oxo-DRA, all-trans-4-hydroxy-DRA, all-trans-5,8-epoxy-DRA, and all-trans-18-hydroxy-DRA. May play a role in the oxidative metabolism of xenobiotics such as tazarotenic acid. This chain is Cytochrome P450 26A1, found in Mus musculus (Mouse).